Consider the following 385-residue polypeptide: Homoserine O-succinyltransferase (385 aa).

The region spanning 46–355 (NAILICHALS…NSQHGHDAFL (310 aa)) is the AB hydrolase-1 domain. The Nucleophile role is filled by S151. R221 is a substrate binding site. Active-site residues include D318 and H351. Substrate is bound at residue D352.

The protein belongs to the AB hydrolase superfamily. MetX family. Homodimer.

Its subcellular location is the cytoplasm. The catalysed reaction is L-homoserine + succinyl-CoA = O-succinyl-L-homoserine + CoA. It functions in the pathway amino-acid biosynthesis; L-methionine biosynthesis via de novo pathway; O-succinyl-L-homoserine from L-homoserine: step 1/1. In terms of biological role, transfers a succinyl group from succinyl-CoA to L-homoserine, forming succinyl-L-homoserine. This Hydrogenovibrio crunogenus (strain DSM 25203 / XCL-2) (Thiomicrospira crunogena) protein is Homoserine O-succinyltransferase.